The sequence spans 324 residues: 2-oxoisovalerate dehydrogenase subunit beta (324 aa).

Thiamine diphosphate-binding positions include E29, 58–60, Q82, and 86–89; these read LSE and YIFP. Substrate-binding positions include 83-86 and H129; that span reads FADY. Residue H129 is the Proton acceptor of the active site.

As to quaternary structure, heterotetramer of two alpha and two beta chains. Directly associated with ODBA in the E1 complex. The cofactor is thiamine diphosphate.

It catalyses the reaction N(6)-[(R)-lipoyl]-L-lysyl-[protein] + 3-methyl-2-oxobutanoate + H(+) = N(6)-[(R)-S(8)-2-methylpropanoyldihydrolipoyl]-L-lysyl-[protein] + CO2. The branched-chain alpha-keto dehydrogenase complex catalyzes the overall conversion of alpha-keto acids to acyl-CoA and CO(2). It contains multiple copies of three enzymatic components: branched-chain alpha-keto acid decarboxylase (E1), lipoamide acyltransferase (E2) and lipoamide dehydrogenase (E3). The protein is 2-oxoisovalerate dehydrogenase subunit beta of Thermus thermophilus (strain ATCC BAA-163 / DSM 7039 / HB27).